Consider the following 456-residue polypeptide: Phosphomethylpyrimidine synthase (456 aa).

Residues Asn80, Met109, Tyr139, His175, 195–197 (SRG), 236–239 (DSLR), and Glu275 contribute to the substrate site. Position 279 (His279) interacts with Zn(2+). Position 302 (Tyr302) interacts with substrate. His343 lines the Zn(2+) pocket. Residues Cys423, Cys426, and Cys431 each coordinate [4Fe-4S] cluster.

Belongs to the ThiC family. Requires [4Fe-4S] cluster as cofactor.

It catalyses the reaction 5-amino-1-(5-phospho-beta-D-ribosyl)imidazole + S-adenosyl-L-methionine = 4-amino-2-methyl-5-(phosphooxymethyl)pyrimidine + CO + 5'-deoxyadenosine + formate + L-methionine + 3 H(+). The protein operates within cofactor biosynthesis; thiamine diphosphate biosynthesis. Catalyzes the synthesis of the hydroxymethylpyrimidine phosphate (HMP-P) moiety of thiamine from aminoimidazole ribotide (AIR) in a radical S-adenosyl-L-methionine (SAM)-dependent reaction. This Synechococcus sp. (strain ATCC 27144 / PCC 6301 / SAUG 1402/1) (Anacystis nidulans) protein is Phosphomethylpyrimidine synthase.